A 247-amino-acid chain; its full sequence is 2,3-bisphosphoglycerate-dependent phosphoglycerate mutase (247 aa).

Substrate is bound by residues 8-15 (RHGESQWN), 21-22 (TG), arginine 60, 87-90 (ERHY), lysine 98, 114-115 (RR), and 183-184 (GN). The active-site Tele-phosphohistidine intermediate is the histidine 9. Glutamate 87 (proton donor/acceptor) is an active-site residue.

This sequence belongs to the phosphoglycerate mutase family. BPG-dependent PGAM subfamily.

The catalysed reaction is (2R)-2-phosphoglycerate = (2R)-3-phosphoglycerate. Its pathway is carbohydrate degradation; glycolysis; pyruvate from D-glyceraldehyde 3-phosphate: step 3/5. Catalyzes the interconversion of 2-phosphoglycerate and 3-phosphoglycerate. This Chlorobaculum parvum (strain DSM 263 / NCIMB 8327) (Chlorobium vibrioforme subsp. thiosulfatophilum) protein is 2,3-bisphosphoglycerate-dependent phosphoglycerate mutase.